The primary structure comprises 177 residues: 2-C-methyl-D-erythritol 2,4-cyclodiphosphate synthase (177 aa).

The a divalent metal cation site is built by D8 and H10. Residues 8–10 (DVH) and 34–35 (HS) contribute to the 4-CDP-2-C-methyl-D-erythritol 2-phosphate site. H42 provides a ligand contact to a divalent metal cation. 4-CDP-2-C-methyl-D-erythritol 2-phosphate contacts are provided by residues 56–58 (DIG), 61–65 (FPDTD), 132–135 (TTEE), F139, and R142.

It belongs to the IspF family. As to quaternary structure, homotrimer. The cofactor is a divalent metal cation.

The enzyme catalyses 4-CDP-2-C-methyl-D-erythritol 2-phosphate = 2-C-methyl-D-erythritol 2,4-cyclic diphosphate + CMP. It functions in the pathway isoprenoid biosynthesis; isopentenyl diphosphate biosynthesis via DXP pathway; isopentenyl diphosphate from 1-deoxy-D-xylulose 5-phosphate: step 4/6. In terms of biological role, involved in the biosynthesis of isopentenyl diphosphate (IPP) and dimethylallyl diphosphate (DMAPP), two major building blocks of isoprenoid compounds. Catalyzes the conversion of 4-diphosphocytidyl-2-C-methyl-D-erythritol 2-phosphate (CDP-ME2P) to 2-C-methyl-D-erythritol 2,4-cyclodiphosphate (ME-CPP) with a corresponding release of cytidine 5-monophosphate (CMP). The protein is 2-C-methyl-D-erythritol 2,4-cyclodiphosphate synthase of Agathobacter rectalis (strain ATCC 33656 / DSM 3377 / JCM 17463 / KCTC 5835 / VPI 0990) (Eubacterium rectale).